Reading from the N-terminus, the 49-residue chain is MRKKITLACKDCGSRNYTTMKSDASAAERLEVKKYCKTCNSHKTHLETK.

This sequence belongs to the bacterial ribosomal protein bL33 family.

The polypeptide is Large ribosomal subunit protein bL33A (Bacillus pumilus (strain SAFR-032)).